Consider the following 538-residue polypeptide: Aldehyde dehydrogenase family 2 member B4, mitochondrial (538 aa).

Residues 1–38 (MAARRVSSLLSRSFSASSPLLFRSQGRNCYNGGILRRF) constitute a mitochondrion transit peptide. An NAD(+)-binding site is contributed by 282-287 (GSTDTG). E305 serves as the catalytic Proton acceptor. The Nucleophile role is filled by C339.

Belongs to the aldehyde dehydrogenase family. In terms of assembly, homotetramer.

It localises to the mitochondrion matrix. It carries out the reaction an aldehyde + NAD(+) + H2O = a carboxylate + NADH + 2 H(+). Its function is as follows. Possesses activity on acetaldehyde and glycolaldehyde in vitro. This Arabidopsis thaliana (Mouse-ear cress) protein is Aldehyde dehydrogenase family 2 member B4, mitochondrial (ALDH2B4).